The sequence spans 204 residues: Ribosomal RNA small subunit methyltransferase J (204 aa).

S-adenosyl-L-methionine contacts are provided by residues 55–56 (RD), 71–72 (ER), and Asp123.

It belongs to the methyltransferase superfamily. RsmJ family.

The protein resides in the cytoplasm. The enzyme catalyses guanosine(1516) in 16S rRNA + S-adenosyl-L-methionine = N(2)-methylguanosine(1516) in 16S rRNA + S-adenosyl-L-homocysteine + H(+). Its function is as follows. Specifically methylates the guanosine in position 1516 of 16S rRNA. In Rhodopseudomonas palustris (strain ATCC BAA-98 / CGA009), this protein is Ribosomal RNA small subunit methyltransferase J.